Reading from the N-terminus, the 1079-residue chain is Tudor domain-containing protein 7A (1079 aa).

Residues 3 to 76 (DVELVKKMLR…TGEVMCFAGV (74 aa)) form the HTH OST-type 1 domain. The interval 153-175 (LPSSRAPAWQMNRKSPVPEKTSV) is disordered. HTH OST-type domains lie at 205 to 270 (DVEL…RLVY) and 366 to 434 (LTTE…ILYT). Tudor domains are found at residues 519–576 (SPKI…FMTL) and 708–765 (RPFC…FLKE).

It belongs to the TDRD7 family.

Its subcellular location is the cytoplasm. Its function is as follows. Component of specific cytoplasmic RNA granules involved in post-transcriptional regulation of specific genes: probably acts by binding to specific mRNAs and regulating their translation. Probably required during spermatogenesis. Required for structural integrity of granules in primordial germ cells (PGCs). In Danio rerio (Zebrafish), this protein is Tudor domain-containing protein 7A (tdrd7a).